The sequence spans 549 residues: Glucose-6-phosphate isomerase (549 aa).

Glutamate 352 (proton donor) is an active-site residue. Active-site residues include histidine 383 and lysine 511.

It belongs to the GPI family.

Its subcellular location is the cytoplasm. It carries out the reaction alpha-D-glucose 6-phosphate = beta-D-fructose 6-phosphate. Its pathway is carbohydrate biosynthesis; gluconeogenesis. The protein operates within carbohydrate degradation; glycolysis; D-glyceraldehyde 3-phosphate and glycerone phosphate from D-glucose: step 2/4. In terms of biological role, catalyzes the reversible isomerization of glucose-6-phosphate to fructose-6-phosphate. This Methylocella silvestris (strain DSM 15510 / CIP 108128 / LMG 27833 / NCIMB 13906 / BL2) protein is Glucose-6-phosphate isomerase.